Reading from the N-terminus, the 107-residue chain is IQ domain-containing protein F6 (107 aa).

Residues 42–71 (QEWAVVKVQAQVRMWQARRRFLQARQAACI) enclose the IQ domain.

This Homo sapiens (Human) protein is IQ domain-containing protein F6 (IQCF6).